A 379-amino-acid polypeptide reads, in one-letter code: Stimulator of interferon genes protein (379 aa).

2 helical membrane-spanning segments follow: residues 18–38 (AKKA…DLGE) and 43–63 (ILQW…FKGV). S-palmitoyl cysteine attachment occurs at residues Cys-88 and Cys-91. The next 2 helical transmembrane spans lie at 89-109 (LGCP…YTPF) and 114-134 (HLPF…SILL). The segment at 153–340 (LNVAQGMAWS…RHLKQEEKEE (188 aa)) is cyclic dinucleotide-binding domain (CBD). 2',3'-cGAMP is bound by residues Ser-162, Tyr-167, Arg-238, and Thr-263. 3',3'-c-di-GMP contacts are provided by residues Ser-162, Tyr-167, 238-241 (RVYT), and Thr-263. Residues Tyr-167, Arg-238, and Thr-263 each contribute to the 2',3'-cUAMP site. The interval 338–363 (KEEVTVDSARTSVMPDPSMLPQGPEL) is disordered. Residues 340-379 (EVTVDSARTSVMPDPSMLPQGPELLISSMDQPLPLRTDVF) form a C-terminal tail (CTT) region. Ser-355 bears the Phosphoserine mark. Positions 363–366 (LLIS) match the pLxIS motif motif. A Phosphoserine; by TBK1 modification is found at Ser-366.

Belongs to the STING family. Homodimer; forms a homodimer in absence of cyclic nucleotide (c-di-GMP or cGAMP). Homotetramer; in presence of cyclic nucleotide (c-di-GMP or cGAMP), forms tetramers and higher-order oligomers through side-by-side packing. Interacts (when phosphorylated) with IRF3; following activation and phosphorylation on the pLxIS motif by TBK1, recruits IRF3. Interacts with TBK1; when homodimer, leading to subsequent production of IFN-beta. Interacts (via transmembrane domain) with TMEM203. Phosphorylation by TBK1 leads to activation and production of IFN-beta. Following cyclic nucleotide (c-di-GMP or cGAMP)-binding, activation and translocation from the endoplasmic reticulum, STING1 is phosphorylated by TBK1 at Ser-366 in the pLxIS motif. The phosphorylated pLxIS motif constitutes an IRF3-binding motif, leading to recruitment of the transcription factor IRF3 to induce type-I interferons and other cytokines. In contrast, lacks phosphorylation site at position 358, leading to reduced production of type-I interferons and other cytokines.

It localises to the endoplasmic reticulum membrane. The protein resides in the cytoplasm. It is found in the perinuclear region. The protein localises to the endoplasmic reticulum-Golgi intermediate compartment membrane. Its subcellular location is the golgi apparatus membrane. It localises to the cytoplasmic vesicle. The protein resides in the autophagosome membrane. It is found in the mitochondrion outer membrane. The protein localises to the cell membrane. It catalyses the reaction H(+)(in) = H(+)(out). In terms of biological role, facilitator of innate immune signaling that acts as a sensor of cytosolic DNA from bacteria and viruses and promotes low production of type I interferon (IFN-alpha and IFN-beta). Compared to other mammals, STING1-dependent type I interferon induction is strongly reduced in bats, suggesting that the cGAS-STING pathway promotes a limited inflammatory response. Innate immune response is triggered in response to non-CpG double-stranded DNA from viruses and bacteria delivered to the cytoplasm. Acts by binding cyclic dinucleotides: recognizes and binds cyclic di-GMP (c-di-GMP), a second messenger produced by bacteria, cyclic UMP-AMP (2',3'-cUAMP), and cyclic GMP-AMP (cGAMP), a messenger produced by CGAS in response to DNA virus in the cytosol. Upon binding to c-di-GMP, cUAMP or cGAMP, STING1 oligomerizes, translocates from the endoplasmic reticulum and is phosphorylated by TBK1 on the pLxIS motif, leading to recruitment and subsequent activation of the transcription factor IRF3 to induce expression of type I interferon and exert a potent anti-viral state. In addition to promote the production of type I interferons, plays a direct role in autophagy. Following cGAMP-binding, STING1 buds from the endoplasmic reticulum into COPII vesicles, which then form the endoplasmic reticulum-Golgi intermediate compartment (ERGIC). The ERGIC serves as the membrane source for WIPI2 recruitment and LC3 lipidation, leading to formation of autophagosomes that target cytosolic DNA or DNA viruses for degradation by the lysosome. Promotes autophagy by acting as a proton channel that directs proton efflux from the Golgi to facilitate MAP1LC3B/LC3B lipidation. The autophagy- and interferon-inducing activities can be uncoupled and autophagy induction is independent of TBK1 phosphorylation. In Pteronotus parnellii (Parnell's mustached bat), this protein is Stimulator of interferon genes protein.